A 100-amino-acid polypeptide reads, in one-letter code: Mini zinc finger protein 2 (100 aa).

Residues 1–26 (MRKRQVVLRRASPEEPSRSSSTASSL) form a disordered region. The segment at 33 to 83 (YGECQKNHAAAVGGYAVDGCREFMASRGEEGTVAALTCAACGCHRSFHRRE) adopts a ZF-HD dimerization-type; degenerate zinc-finger fold.

In terms of assembly, homo- and heterodimers. Interacts with ZHD1, ZHD3, ZHD5, ZHD8, ZHD10 and ZHD13. Mostly expressed in stems, flowers and siliques, and, to a lower extent, in inflorescence.

It is found in the cytoplasm. Its function is as follows. Inhibits zinc finger homeodomain (ZHD) transcription factors by interacting with them to prevent both their nuclear localization and their DNA-binding properties. Involved in integrating signals from multiple hormones by regulating the expression of specific genes. This Arabidopsis thaliana (Mouse-ear cress) protein is Mini zinc finger protein 2 (MIF2).